We begin with the raw amino-acid sequence, 213 residues long: Ribonuclease HII (213 aa).

Residues 20 to 209 enclose the RNase H type-2 domain; sequence ELVAGVDEVG…VRQAYEALEG (190 aa). Residues D26, E27, and D118 each coordinate a divalent metal cation.

It belongs to the RNase HII family. The cofactor is Mn(2+). Requires Mg(2+) as cofactor.

It is found in the cytoplasm. The enzyme catalyses Endonucleolytic cleavage to 5'-phosphomonoester.. Its function is as follows. Endonuclease that specifically degrades the RNA of RNA-DNA hybrids. This Pseudomonas fluorescens (strain Pf0-1) protein is Ribonuclease HII.